Reading from the N-terminus, the 259-residue chain is Type III pantothenate kinase (259 aa).

6–13 is a binding site for ATP; sequence DVGNTNIV. Substrate contacts are provided by residues tyrosine 100 and 107–110; that span reads GADR. The active-site Proton acceptor is aspartate 109. Aspartate 129 contributes to the K(+) binding site. Residue threonine 132 participates in ATP binding. Residue threonine 184 participates in substrate binding.

This sequence belongs to the type III pantothenate kinase family. In terms of assembly, homodimer. It depends on NH4(+) as a cofactor. Requires K(+) as cofactor.

It is found in the cytoplasm. The catalysed reaction is (R)-pantothenate + ATP = (R)-4'-phosphopantothenate + ADP + H(+). Its pathway is cofactor biosynthesis; coenzyme A biosynthesis; CoA from (R)-pantothenate: step 1/5. Catalyzes the phosphorylation of pantothenate (Pan), the first step in CoA biosynthesis. The protein is Type III pantothenate kinase of Clostridium kluyveri (strain NBRC 12016).